Consider the following 366-residue polypeptide: 3-dehydroquinate synthase (366 aa).

NAD(+) contacts are provided by residues 107-111 (GVIGD), 131-132 (TT), K144, and K153. Residues E186, H251, and H268 each contribute to the Zn(2+) site.

The protein belongs to the sugar phosphate cyclases superfamily. Dehydroquinate synthase family. Requires Co(2+) as cofactor. It depends on Zn(2+) as a cofactor. The cofactor is NAD(+).

The protein localises to the cytoplasm. The catalysed reaction is 7-phospho-2-dehydro-3-deoxy-D-arabino-heptonate = 3-dehydroquinate + phosphate. Its pathway is metabolic intermediate biosynthesis; chorismate biosynthesis; chorismate from D-erythrose 4-phosphate and phosphoenolpyruvate: step 2/7. Catalyzes the conversion of 3-deoxy-D-arabino-heptulosonate 7-phosphate (DAHP) to dehydroquinate (DHQ). The protein is 3-dehydroquinate synthase of Microcystis aeruginosa (strain NIES-843 / IAM M-2473).